Reading from the N-terminus, the 103-residue chain is Small ribosomal subunit protein uS10 (103 aa).

Belongs to the universal ribosomal protein uS10 family. As to quaternary structure, part of the 30S ribosomal subunit.

Its function is as follows. Involved in the binding of tRNA to the ribosomes. This Chromohalobacter salexigens (strain ATCC BAA-138 / DSM 3043 / CIP 106854 / NCIMB 13768 / 1H11) protein is Small ribosomal subunit protein uS10.